A 367-amino-acid chain; its full sequence is Protein-glutamate methylesterase/protein-glutamine glutaminase 1 (367 aa).

In terms of domain architecture, Response regulatory spans 9–126 (KVLCVDDSAL…RDGMLDYSEK (118 aa)). Aspartate 60 bears the 4-aspartylphosphate mark. The region spanning 168 to 360 (LVSTEKLIIV…RRIMARLASM (193 aa)) is the CheB-type methylesterase domain. Active-site residues include serine 180, histidine 206, and aspartate 302.

It belongs to the CheB family. In terms of processing, phosphorylated by CheA. Phosphorylation of the N-terminal regulatory domain activates the methylesterase activity.

Its subcellular location is the cytoplasm. The enzyme catalyses [protein]-L-glutamate 5-O-methyl ester + H2O = L-glutamyl-[protein] + methanol + H(+). The catalysed reaction is L-glutaminyl-[protein] + H2O = L-glutamyl-[protein] + NH4(+). Functionally, involved in chemotaxis. Part of a chemotaxis signal transduction system that modulates chemotaxis in response to various stimuli. Catalyzes the demethylation of specific methylglutamate residues introduced into the chemoreceptors (methyl-accepting chemotaxis proteins or MCP) by CheR. Also mediates the irreversible deamidation of specific glutamine residues to glutamic acid. The sequence is that of Protein-glutamate methylesterase/protein-glutamine glutaminase 1 from Burkholderia pseudomallei (strain K96243).